Reading from the N-terminus, the 549-residue chain is Probable protein kinase UbiB (549 aa).

The Protein kinase domain occupies 123-501; it reads DFDDIPLASA…QQKAHKSNYL (379 aa). ATP is bound by residues 129–137 and Lys152; that span reads LASASISQV. The Proton acceptor role is filled by Asp287. Transmembrane regions (helical) follow at residues 498-518 and 520-540; these read SNYL…LINQ and ATLW…VLGW.

The protein belongs to the ABC1 family. UbiB subfamily.

It localises to the cell inner membrane. It participates in cofactor biosynthesis; ubiquinone biosynthesis [regulation]. Is probably a protein kinase regulator of UbiI activity which is involved in aerobic coenzyme Q (ubiquinone) biosynthesis. This is Probable protein kinase UbiB from Shewanella halifaxensis (strain HAW-EB4).